Reading from the N-terminus, the 694-residue chain is Elongation factor G (694 aa).

The 275-residue stretch at 11 to 285 (KDYRNIGIMA…AVIDYLPSPL (275 aa)) folds into the tr-type G domain. Residues 20-27 (AHIDAGKT), 84-88 (DTPGH), and 138-141 (NKMD) each bind GTP.

The protein belongs to the TRAFAC class translation factor GTPase superfamily. Classic translation factor GTPase family. EF-G/EF-2 subfamily.

It is found in the cytoplasm. In terms of biological role, catalyzes the GTP-dependent ribosomal translocation step during translation elongation. During this step, the ribosome changes from the pre-translocational (PRE) to the post-translocational (POST) state as the newly formed A-site-bound peptidyl-tRNA and P-site-bound deacylated tRNA move to the P and E sites, respectively. Catalyzes the coordinated movement of the two tRNA molecules, the mRNA and conformational changes in the ribosome. This chain is Elongation factor G, found in Mycoplasma mobile (strain ATCC 43663 / 163K / NCTC 11711) (Mesomycoplasma mobile).